Reading from the N-terminus, the 939-residue chain is Valine--tRNA ligase (939 aa).

The short motif at 47-57 (PNVTGILHMGH) is the 'HIGH' region element. A 'KMSKS' region motif is present at residues 563-567 (KLSKS). Residue Lys-566 coordinates ATP. Residues 874–939 (EHLAKERVRL…QSILDKLASL (66 aa)) adopt a coiled-coil conformation.

Belongs to the class-I aminoacyl-tRNA synthetase family. ValS type 1 subfamily. In terms of assembly, monomer.

Its subcellular location is the cytoplasm. It catalyses the reaction tRNA(Val) + L-valine + ATP = L-valyl-tRNA(Val) + AMP + diphosphate. In terms of biological role, catalyzes the attachment of valine to tRNA(Val). As ValRS can inadvertently accommodate and process structurally similar amino acids such as threonine, to avoid such errors, it has a 'posttransfer' editing activity that hydrolyzes mischarged Thr-tRNA(Val) in a tRNA-dependent manner. This chain is Valine--tRNA ligase, found in Chlamydia trachomatis serovar L2 (strain ATCC VR-902B / DSM 19102 / 434/Bu).